The primary structure comprises 418 residues: tRNA-2-methylthio-N(6)-dimethylallyladenosine synthase (418 aa).

Positions 2-118 (PGYYLWTIGC…WGEIPEGFIL (117 aa)) constitute an MTTase N-terminal domain. [4Fe-4S] cluster is bound by residues Cys-11, Cys-47, Cys-81, Cys-134, Cys-138, and Cys-141. In terms of domain architecture, Radical SAM core spans 120–352 (LKPPVSASIT…DLQKETVSKA (233 aa)). The TRAM domain maps to 354–414 (SALVDTFAEV…PWSLQAKLVK (61 aa)).

The protein belongs to the methylthiotransferase family. MiaB subfamily. As to quaternary structure, monomer. Requires [4Fe-4S] cluster as cofactor.

The protein localises to the cytoplasm. The enzyme catalyses N(6)-dimethylallyladenosine(37) in tRNA + (sulfur carrier)-SH + AH2 + 2 S-adenosyl-L-methionine = 2-methylsulfanyl-N(6)-dimethylallyladenosine(37) in tRNA + (sulfur carrier)-H + 5'-deoxyadenosine + L-methionine + A + S-adenosyl-L-homocysteine + 2 H(+). Its function is as follows. Catalyzes the methylthiolation of N6-(dimethylallyl)adenosine (i(6)A), leading to the formation of 2-methylthio-N6-(dimethylallyl)adenosine (ms(2)i(6)A) at position 37 in tRNAs that read codons beginning with uridine. This is tRNA-2-methylthio-N(6)-dimethylallyladenosine synthase from Dehalococcoides mccartyi (strain ATCC BAA-2266 / KCTC 15142 / 195) (Dehalococcoides ethenogenes (strain 195)).